Reading from the N-terminus, the 866-residue chain is Leucine--tRNA ligase (866 aa).

Residues P42–H52 carry the 'HIGH' region motif. Positions K630 to S634 match the 'KMSKS' region motif. K633 contacts ATP.

It belongs to the class-I aminoacyl-tRNA synthetase family.

Its subcellular location is the cytoplasm. It carries out the reaction tRNA(Leu) + L-leucine + ATP = L-leucyl-tRNA(Leu) + AMP + diphosphate. The polypeptide is Leucine--tRNA ligase (Laribacter hongkongensis (strain HLHK9)).